The following is a 205-amino-acid chain: uncharacterized protein (205 aa).

The signal sequence occupies residues 1-40; sequence MSAGKSYRKKMKQRRMNMKISKYALGILMLSLVFVLSACG. The segment at 44 to 82 is disordered; it reads STKESTHDNHSDSSTHEEMDHSGSADVPEGLQESKNPKY. The segment covering 47–66 has biased composition (basic and acidic residues); the sequence is ESTHDNHSDSSTHEEMDHSG.

This is an uncharacterized protein from Bacillus subtilis (strain 168).